Reading from the N-terminus, the 694-residue chain is Polyribonucleotide nucleotidyltransferase (694 aa).

Mg(2+)-binding residues include Asp-485 and Asp-491. The KH domain maps to 552-611; that stretch reads PRIETMQIKPNKIATVIGPGGKQIRQIIEEAGVQIDINDSGLVSISASSPQAIEKAKSMI. An S1 motif domain is found at 621 to 689; it reads GKIYEGRVTS…EKGQYKLSHK (69 aa).

It belongs to the polyribonucleotide nucleotidyltransferase family. It depends on Mg(2+) as a cofactor.

It localises to the cytoplasm. It carries out the reaction RNA(n+1) + phosphate = RNA(n) + a ribonucleoside 5'-diphosphate. In terms of biological role, involved in mRNA degradation. Catalyzes the phosphorolysis of single-stranded polyribonucleotides processively in the 3'- to 5'-direction. The protein is Polyribonucleotide nucleotidyltransferase of Chlamydia caviae (strain ATCC VR-813 / DSM 19441 / 03DC25 / GPIC) (Chlamydophila caviae).